The primary structure comprises 297 residues: MEINGVEIEDTYAEAFPIKIARVLITAATKRWALVAATEATGFATSVIMCPAEAGIERLASPSETPDGRPGVYVQICTFKYEALEEQLLERIGQCVLTAPTTAVFNGLPEAEKQFNVGFKLKFFADGMESETQIAGRKVYKVPIMEGDFLAEENIGAIAGIAGGNFFIFGDSQMTALTAAEAAVDTIAELEGTITPFPGGIVASGSKSGANKYKFLKATANERFCPSIKDKIENTEIPADVNAVYEIVINGLDEESIKAAMKAGIKAAVTVPGVKKISAGNYGGKLGKYQFKLHELF.

The protein belongs to the FTR family. As to quaternary structure, homotetramer.

The protein resides in the cytoplasm. The enzyme catalyses N-formylmethanofuran + 5,6,7,8-tetrahydromethanopterin + H(+) = N(5)-formyl-5,6,7,8-tetrahydromethanopterin + methanofuran. Its pathway is one-carbon metabolism; methanogenesis from CO(2); 5,10-methenyl-5,6,7,8-tetrahydromethanopterin from CO(2): step 2/3. Functionally, catalyzes the reversible transfer of a formyl group from formylmethanofuran (formyl-MFR) to tetrahydromethanopterin (H(4)MPT) to produce 5-formyl tetrahydromethanopterin (5-formyl-H(4)MPT) and methanofuran (MFR). This chain is Formylmethanofuran--tetrahydromethanopterin formyltransferase, found in Methanosarcina barkeri (strain Fusaro / DSM 804).